The primary structure comprises 364 residues: Transcription factor TGA4 (364 aa).

A disordered region spans residues 39 to 79 (PGSIIIPTNEKPDSLSEDTSHGTEGTPHKFDQEASTSRHPD). Positions 48 to 79 (EKPDSLSEDTSHGTEGTPHKFDQEASTSRHPD) are enriched in basic and acidic residues. Residues 78-141 (PDKIQRRLAQ…NGVDTNALSF (64 aa)) form the bZIP domain. Coiled coils occupy residues 79 to 127 (DKIQ…RQQG) and 257 to 277 (NLRQSCQQAEDALSQGMEKLQ). Positions 80–100 (KIQRRLAQNREAARKSRLRKK) are basic motif. The segment at 106 to 120 (LETSRLKLIHLEQEL) is leucine-zipper. One can recognise a DOG1 domain in the interval 149–359 (IVAFEMEYGH…RALSSSWAAR (211 aa)). A disulfide bridge links cysteine 256 with cysteine 262.

The protein belongs to the bZIP family. As to quaternary structure, binds DNA as a dimer. Interaction with the Dof domain proteins OBP1, OBP2 or OBP3 enhances the binding to the ocs element. Interacts with RAP2-3/EPB, an ethylene-responsive element binding protein. The reduced form interacts with NPR1. In terms of tissue distribution, predominantly expressed in roots.

It is found in the nucleus. Its function is as follows. Transcriptional activator that binds specifically to the DNA sequence 5'-TGACG-3'. Recognizes ocs elements like the as-1 motif of the cauliflower mosaic virus 35S promoter. Binding to the as-1-like cis elements mediate auxin- and salicylic acid-inducible transcription. May be involved in the induction of the systemic acquired resistance (SAR) via its interaction with NPR1. Could also bind to the Hex-motif (5'-TGACGTGG-3') another cis-acting element found in plant histone promoters. This is Transcription factor TGA4 (TGA4) from Arabidopsis thaliana (Mouse-ear cress).